A 270-amino-acid chain; its full sequence is LIM zinc-binding domain-containing Nebulette (270 aa).

Residues 3–63 (PQCARCGKVV…NAHYPKQSFT (61 aa)) enclose the LIM zinc-binding domain. A Nebulin 1 repeat occupies 61–95 (SFTTVADTPENLRLKQQSELQSQVKYKRDFEESKG). Omega-N-methylarginine is present on R96. The stretch at 97 to 131 (GFSIVTDTPELQRLKRTQEQISNVKYHEDFEKTKG) is one Nebulin 2 repeat. R132 carries the post-translational modification Omega-N-methylarginine. The stretch at 133-159 (GFTPVVDDPVTERVRKSTQVVSDAAYK) is one Nebulin 3 repeat. T135 carries the phosphothreonine modification. Residues 210–270 (AHLRTYRAMY…LPANYIEFVN (61 aa)) enclose the SH3 domain. At S230 the chain carries Phosphoserine.

Its subcellular location is the cytoplasm. Its function is as follows. Binds to actin and plays an important role in the assembly of the Z-disk. Isoform 2 might play a role in the assembly of focal adhesion. The sequence is that of LIM zinc-binding domain-containing Nebulette (Nebl) from Mus musculus (Mouse).